The sequence spans 285 residues: PHO85 cyclin-7 (285 aa).

Low complexity predominate over residues 1 to 14 (MELSSPSKKTTTSP). Residues 1–42 (MELSSPSKKTTTSPINIPGGNRDNLIIGPHSHSFKTDPFSSN) form a disordered region. At serine 69 the chain carries Phosphoserine.

Belongs to the cyclin family. PHO80 subfamily. In terms of assembly, forms a cyclin-CDK complex with PHO85. Interacts with the substrate proteins MMR1 and YJL084C. Interacts with the CDK inhibitor (CKI) PHO81.

It localises to the cytoplasm. The PCL7-PHO85 cyclin-CDK is inhibited by PHO81 in low-phosphate conditions. Functionally, cyclin partner of the cyclin-dependent kinase (CDK) PHO85. Together with cyclin PCL6, controls glycogen phosphorylase and glycogen synthase activities in response to nutrient availablility. The PCL7-PHO85 cyclin-CDK holoenzyme has GLC8 kinase activity and phosphorylates and inactivates the phosphatase PP1-2 inhibitor GLC8, causing activation of PP1-2, which then dephosphorylates and activates glycogen phosphorylase. PCL7-PHO85 also phosphorylates MMR1 and YJL084C. The polypeptide is PHO85 cyclin-7 (PCL7) (Saccharomyces cerevisiae (strain ATCC 204508 / S288c) (Baker's yeast)).